The chain runs to 165 residues: Pro-MCH (165 aa).

The N-terminal stretch at 1 to 21 (MAKMSLSSYMLMLAFSLFSHG) is a signal peptide. Over residues 69–82 (DESGFMKDDDDKTT) the composition is skewed to basic and acidic residues. The tract at residues 69–89 (DESGFMKDDDDKTTKNTGSKQ) is disordered. Isoleucine 143 is modified (isoleucine amide). Cysteine 153 and cysteine 162 are oxidised to a cystine.

The protein belongs to the melanin-concentrating hormone family. In terms of processing, pro-MCH is processed differentially in the brain and in peripheral organs producing two neuropeptides; NEI and MCH. A third peptide, NGE, may also be produced. Preferential processing in neurons by prohormone convertase 2 (PC2) generates NEI. MCH is generated in neurons of the lateral hypothalmic area by several prohormone convertases including PC1/3, PC2 and PC5/6. In terms of tissue distribution, MCH is present in all regions of the brain and in neurointermediate lobe of the pituarity gland, with highest concentrations in the hypothalamus. Also expressed to a much lesser extent in stomach, lamina propria of both duodenum and colon, ovary, thymus, pancreas, adrenal gland and testis (spermatogonia, early spermatocytes and Sertoli cells). Weak expression in heart and lung. The other peptides are expressed at least in Sertoli cells, nei being also expressed in brain, stomach and proximal duodenum. In brain exclusively mature mch and nei peptides are present. In peripheral tissues a large product, encompassing the NEI and MCH domains of the precursor, is found predominantly. At low levels fully processed MCH and NEI peptides are present in gut. No expression in peripheral blood.

The protein resides in the secreted. Its function is as follows. MCH inhibits ACTH secretion at the end of the light on period which corresponds to the peak of the circadian rhythm in ACTH. Inhibits also stress induced ACTH release during the light off period of the cycle. Involved as a neurotransmitter or neuromodulator in a broad array of neuronal functions. Stimulates sexual behavior when injected into the ventromedial nucleus, this effect is antagonized by NEI. In the medial preoptic area, stimulates anxiety and sexual behavior. Antagonizes inhibitory effect of melanotropin alpha on exploration behavior. NEI can influence differentiation of neuronal processes in brain neurons. Affects the content of neurofilament protein in neuritogenesis (in vitro). May also be a neuromodulatory factor. In behavioral tests, it stimulates exploration and anxiety when injected into the ventromedial nucleus. Also stimulates grooming, locomotion and rearing. May antagonize the inhibitory effect of mch on ACTH release. Reduces dopamine and dopac release in the ventromedial nucleus. The chain is Pro-MCH (Pmch) from Rattus norvegicus (Rat).